Consider the following 344-residue polypeptide: Fructose-1,6-bisphosphatase class 1 (344 aa).

Residues Glu107, Asp129, Leu131, and Asp132 each coordinate Mg(2+). The substrate site is built by Asn224, Tyr252, and Lys282. A Mg(2+)-binding site is contributed by Glu288.

It belongs to the FBPase class 1 family. In terms of assembly, homotetramer. Mg(2+) serves as cofactor.

It is found in the cytoplasm. The enzyme catalyses beta-D-fructose 1,6-bisphosphate + H2O = beta-D-fructose 6-phosphate + phosphate. It participates in carbohydrate biosynthesis; Calvin cycle. The chain is Fructose-1,6-bisphosphatase class 1 from Synechococcus sp. (strain ATCC 27144 / PCC 6301 / SAUG 1402/1) (Anacystis nidulans).